The primary structure comprises 780 residues: Pentatricopeptide repeat-containing protein At1g79540 (780 aa).

PPR repeat units lie at residues 91–125 (SRES…GVSV), 126–160 (DSYC…DCRP), 161–196 (DVFT…NCSP), 197–231 (NLYT…GISP), 232–266 (NRVT…GNYP), 267–301 (DSVA…GFVL), 302–336 (GLRG…NIKP), 337–371 (DIIL…GISP), 372–406 (DTYC…ESFP), 407–441 (DACT…GCSP), 442–476 (SVAT…RPAS), 481–515 (LSHS…GSSP), 516–550 (DIVS…GLSP), 551–585 (DSVT…RHSP), 653–687 (TLGP…KILV), 688–722 (TPPS…NFKL), and 723–758 (MPRV…GYNV).

This sequence belongs to the PPR family. P subfamily.

The polypeptide is Pentatricopeptide repeat-containing protein At1g79540 (Arabidopsis thaliana (Mouse-ear cress)).